The chain runs to 118 residues: Small ribosomal subunit protein uS10 (118 aa).

Ser37 carries the post-translational modification Phosphoserine.

The protein belongs to the universal ribosomal protein uS10 family. As to quaternary structure, component of the small ribosomal subunit (SSU). Mature yeast ribosomes consist of a small (40S) and a large (60S) subunit. The 40S small subunit contains 1 molecule of ribosomal RNA (18S rRNA) and at least 33 different proteins. The large 60S subunit contains 3 rRNA molecules (25S, 5.8S and 5S rRNA) and at least 46 different proteins.

Its subcellular location is the cytoplasm. In terms of biological role, component of the ribosome, a large ribonucleoprotein complex responsible for the synthesis of proteins in the cell. The small ribosomal subunit (SSU) binds messenger RNAs (mRNAs) and translates the encoded message by selecting cognate aminoacyl-transfer RNA (tRNA) molecules. The large subunit (LSU) contains the ribosomal catalytic site termed the peptidyl transferase center (PTC), which catalyzes the formation of peptide bonds, thereby polymerizing the amino acids delivered by tRNAs into a polypeptide chain. The nascent polypeptides leave the ribosome through a tunnel in the LSU and interact with protein factors that function in enzymatic processing, targeting, and the membrane insertion of nascent chains at the exit of the ribosomal tunnel. The chain is Small ribosomal subunit protein uS10 (rps20) from Schizosaccharomyces pombe (strain 972 / ATCC 24843) (Fission yeast).